Reading from the N-terminus, the 1314-residue chain is E3 ubiquitin-protein ligase RNF123 (1314 aa).

Alanine 2 carries the N-acetylalanine modification. Residues 74–254 form the B30.2/SPRY domain; that stretch reads VDSEDNESQG…VAFNFGSRPL (181 aa). Residues 460–483 form a disordered region; that stretch reads HRSSRESRDGKEAREETTEERQRR. The segment covering 462–483 has biased composition (basic and acidic residues); sequence SSRESRDGKEAREETTEERQRR. Serine 675 is modified (phosphoserine). Arginine 683 is modified (asymmetric dimethylarginine). The interval 968–974 is interaction with NFKB1; that stretch reads WILVRLW. Zn(2+)-binding residues include cysteine 1254, cysteine 1257, cysteine 1269, histidine 1271, cysteine 1274, cysteine 1277, cysteine 1288, and cysteine 1291. The RING-type zinc-finger motif lies at 1254–1292; that stretch reads CPICYAHPISAVFQPCGHKSCKACINQHLMNNKDCFFCK.

In terms of assembly, component of the KPC complex composed of RNF123/KPC1 and UBAC1/KPC2. Interacts with UBAC1 and CDKN1B via its N-terminal domain. Interacts with RIGI (via N-terminus) and IFIH1 (via N-terminus). Post-translationally, ubiquitinated, leading to its degradation. Deubiquitinated by USP19, thereby stimulating CDKN1B ubiquitin-dependent degradation.

It localises to the cytoplasm. The catalysed reaction is S-ubiquitinyl-[E2 ubiquitin-conjugating enzyme]-L-cysteine + [acceptor protein]-L-lysine = [E2 ubiquitin-conjugating enzyme]-L-cysteine + N(6)-ubiquitinyl-[acceptor protein]-L-lysine.. The protein operates within protein modification; protein ubiquitination. Its function is as follows. Catalytic subunit of the KPC complex that acts as E3 ubiquitin-protein ligase. Promotes the ubiquitination and proteasome-mediated degradation of CDKN1B which is the cyclin-dependent kinase inhibitor at the G0-G1 transition of the cell cycle. Also acts as a key regulator of the NF-kappa-B signaling by promoting maturation of the NFKB1 component of NF-kappa-B: acts by catalyzing ubiquitination of the NFKB1 p105 precursor, leading to limited proteasomal degradation of NFKB1 p105 and generation of the active NFKB1 p50 subunit. Functions also as an inhibitor of innate antiviral signaling mediated by RIGI and IFIH1 independently of its E3 ligase activity. Interacts with the N-terminal CARD domains of RIGI and IFIH1 and competes with the downstream adapter MAVS. The polypeptide is E3 ubiquitin-protein ligase RNF123 (Rnf123) (Mus musculus (Mouse)).